Here is a 959-residue protein sequence, read N- to C-terminus: MKSEVSSDAPKRQENFKGVLLNPETIGASKSFPKEVEMIASKVSNEFNHLCSDTNKQQSDLNSNGTEQDKSLVVHKKRKSQQAGTSYAQSCEVKEYQRLLRLQPKSDEDNDSSFSDCISSPSSSSHFGDSDTMTSDEDKDNPLSSVNSTPRTQSARAQKWPRPHTDSVSSLLMKRPCYQVSSLRRPLHRKRFVKNVSSQRTQKQKERMMLQRKKREVLARQKYALLPSSSSSSENDLSSESSSSSSTEGEDLFVSTGENRQDGTTLPSGGMDEDVVVIEASSTPQVTANEEINVTSTDSEVEIVTVGETYRSRATLRHPRSHWGQNSQSGRTQEQRTRNRVSTVIQPLRQNTTEVVDLTVDEDDPTVVQTTSGRVESQPVSIVSSLTSTSEPASDSMSGLMGSAVPEIPAIPPNTVGTIADDSRTCTSGANADGGPPAMPRLPSCCPQHSPCGGSSQNHVLGHPHSSCFPPHSHHFPHHHHHHHHSSHPGVPLSPSFRDSHCTVERNAAVPPPCGVSSSSGSTYHDPQALPVDLSNNGIRSHGSVGFHSTSAFDPCCPGSSSRSTVYGHQATTSTAQTMAIDGYGSSMVAQAQPPPPTPLSSCRHYMHASYTSLPRPLHHQTSSCPHSNSASQPPPPPPPPPPPPMDYVIAHQVPFISPLPSLTSTHAVPPPPPSHHLSAAAAPLPQHLSTSHQSMSHHISATAPVTQRLHAHEVIQRMEVQRRRMMQHPTRAHERPPPHPHRMHPNYGHGHHIHVPQTMSSHPRQGPERSAWEIAIETGVTAATYQTGPLHTHLAHYHPPPRLHHLQIGALPLMVPDMAGYPHIRYISSGLDGRSFRVPFRGNFEELIHLEERLGNVNRGASQGTIERCTYPHKYKKVSTDWFSQRKLHSKQDGEEATEEDTEEKCTICLSILEEGEDVRRLPCMHLFHQVCVDQWLITNKKCPICRVDIDTQLPTES.

Residues C51–T66 are compositionally biased toward polar residues. Disordered regions lie at residues C51–L171, R189–R212, and L225–M271. The segment covering S112 to D131 has biased composition (low complexity). Residues P142–R156 show a composition bias toward polar residues. The segment covering S228 to S246 has biased composition (low complexity). Over residues T256–P267 the composition is skewed to polar residues. Residues V275 to E279 carry the SUMO interaction motif 1 (SIM) motif. An SUMO interaction motif 2 (SIM) motif is present at residues E300–V306. The disordered stretch occupies residues H318 to V341. The span at W323 to T332 shows a compositional bias: polar residues. Residues V355–T359 carry the SUMO interaction motif 3 (SIM) motif. Polar residues predominate over residues T370–M397. Disordered regions lie at residues T370–G399, H475–D499, P615–V649, and P661–A680. The span at H475 to S487 shows a compositional bias: basic residues. Positions H620 to S632 are enriched in polar residues. Residues Q633–M646 show a composition bias toward pro residues. Residues Y872 to H874 form a ubiquitin binding region. Zn(2+) is bound by residues C907 and C910. The RING-type; atypical zinc finger occupies C907–R948. The interval R922–M926 is ubiquitin binding. The Zn(2+) site is built by H930 and C933.

Belongs to the Arkadia family. Monomer.

The protein localises to the nucleus. The protein resides in the cytoplasm. It localises to the PML body. It catalyses the reaction S-ubiquitinyl-[E2 ubiquitin-conjugating enzyme]-L-cysteine + [acceptor protein]-L-lysine = [E2 ubiquitin-conjugating enzyme]-L-cysteine + N(6)-ubiquitinyl-[acceptor protein]-L-lysine.. It participates in protein modification; protein ubiquitination. With respect to regulation, binds free ubiquitin non-covalently via its RING-type zinc finger. Ubiquitin-binding leads to enhance the E3 ubiquitin-protein ligase activity by stabilizing the ubiquitin-conjugating enzyme E2 (donor ubiquitin) in the 'closed' conformation and activating ubiquitin transfer. E3 ubiquitin-protein ligase required for mesoderm patterning during embryonic development. Acts as an enhancer of the transcriptional responses of the smad2/smad3 effectors, which are activated downstream of BMP. Acts by mediating ubiquitination and degradation of SMAD inhibitors such as smad7, inducing their proteasomal degradation and thereby enhancing the transcriptional activity of TGF-beta and BMP. Specifically binds polysumoylated chains via SUMO interaction motifs (SIMs) and mediates ubiquitination of sumoylated substrates. The regulation of the BMP-SMAD signaling is however independent of sumoylation and is not dependent of SUMO interaction motifs (SIMs). The polypeptide is E3 ubiquitin-protein ligase arkadia-B (rnf111-b) (Xenopus laevis (African clawed frog)).